The sequence spans 54 residues: Hydrophobic protein RCI2A (54 aa).

The next 2 membrane-spanning stretches (helical) occupy residues 2 to 22 and 32 to 52; these read STATFVDIIIAILLPPLGVFL and ICLVLTLLGYIPGIIYAIYVL.

This sequence belongs to the UPF0057 (PMP3) family.

The protein resides in the membrane. This Arabidopsis thaliana (Mouse-ear cress) protein is Hydrophobic protein RCI2A (RCI2A).